A 562-amino-acid chain; its full sequence is Putative transport protein ETA_21820 (562 aa).

The next 5 helical transmembrane spans lie at 8-28, 32-52, 66-86, 94-114, and 158-178; these read LLIGNHILLLFVVLALGLCLG, LGSVQLGNSIGVLVVSLLLGQ, FMLFIFCVGVEAGPNFFSIFF, MLAIVMVSSAMVLALGLGKLF, and HLSLGYALTYLVGLVSLIFGA. 2 consecutive RCK C-terminal domains span residues 202 to 288 and 290 to 373; these read LDPD…SFRN and KEVF…RIGF. 6 helical membrane-spanning segments follow: residues 383-403, 406-426, 440-460, 473-493, 503-523, and 540-560; these read LLAFCAFFILGLMIGMITFQF, FNFGIGNAAGLLFAGIMLGFL, ALTMVKEFGLMVFMAGVGLSA, LLMLGAGLIVSLVPVVICFLF, ALLFGAIMGARTCAPAMEIIS, and AIANVLLTLAGTLIVIIWPIL.

Belongs to the AAE transporter (TC 2.A.81) family. YbjL subfamily.

The protein localises to the cell membrane. The chain is Putative transport protein ETA_21820 from Erwinia tasmaniensis (strain DSM 17950 / CFBP 7177 / CIP 109463 / NCPPB 4357 / Et1/99).